Reading from the N-terminus, the 88-residue chain is uncharacterized protein (88 aa).

A run of 2 helical transmembrane segments spans residues 13–33 (FLAF…GWGP) and 62–82 (WFNI…ITGI).

It is found in the cell membrane. This is an uncharacterized protein from Bacillus subtilis (strain 168).